We begin with the raw amino-acid sequence, 362 residues long: Ferrochelatase (362 aa).

Residues H228 and E309 each coordinate Fe cation.

Belongs to the ferrochelatase family.

The protein localises to the cytoplasm. It carries out the reaction heme b + 2 H(+) = protoporphyrin IX + Fe(2+). The protein operates within porphyrin-containing compound metabolism; protoheme biosynthesis; protoheme from protoporphyrin-IX: step 1/1. Functionally, catalyzes the ferrous insertion into protoporphyrin IX. This Bordetella pertussis (strain Tohama I / ATCC BAA-589 / NCTC 13251) protein is Ferrochelatase.